The primary structure comprises 209 residues: Uracil phosphoribosyltransferase (209 aa).

5-phospho-alpha-D-ribose 1-diphosphate-binding positions include Arg-78, Arg-103, and 130-138; that span reads DPMFATGGT. Uracil contacts are provided by residues Ile-193 and 198-200; that span reads GDA. Residue Asp-199 coordinates 5-phospho-alpha-D-ribose 1-diphosphate.

It belongs to the UPRTase family. The cofactor is Mg(2+).

The catalysed reaction is UMP + diphosphate = 5-phospho-alpha-D-ribose 1-diphosphate + uracil. The protein operates within pyrimidine metabolism; UMP biosynthesis via salvage pathway; UMP from uracil: step 1/1. Allosterically activated by GTP. Functionally, catalyzes the conversion of uracil and 5-phospho-alpha-D-ribose 1-diphosphate (PRPP) to UMP and diphosphate. The protein is Uracil phosphoribosyltransferase of Campylobacter fetus subsp. fetus (strain 82-40).